The sequence spans 217 residues: 3,4-dihydroxy-2-butanone 4-phosphate synthase (217 aa).

Residues 37-38 (RE), Asp42, 150-154 (RRGHT), and Glu174 contribute to the D-ribulose 5-phosphate site. Glu38 is a binding site for Mg(2+). His153 contacts Mg(2+).

Belongs to the DHBP synthase family. Homodimer. Requires Mg(2+) as cofactor. Mn(2+) serves as cofactor.

The catalysed reaction is D-ribulose 5-phosphate = (2S)-2-hydroxy-3-oxobutyl phosphate + formate + H(+). It participates in cofactor biosynthesis; riboflavin biosynthesis; 2-hydroxy-3-oxobutyl phosphate from D-ribulose 5-phosphate: step 1/1. Its function is as follows. Catalyzes the conversion of D-ribulose 5-phosphate to formate and 3,4-dihydroxy-2-butanone 4-phosphate. The chain is 3,4-dihydroxy-2-butanone 4-phosphate synthase from Pseudoalteromonas translucida (strain TAC 125).